Consider the following 169-residue polypeptide: MVVLGRIAGPHGIRGQIKVIPFTEYVDGLMEYPVWCLSRDEKNWQIVRPATFFIHDNLLIVTLTGYSDRTSASELKGLLVAVPRSQLPPLSKDGEDGYYWTDLIGISVVNMQGEPLGTVAGLFETGANDVLRVRLSGSSKDELIPFVDQVIRQVDLESRQITVDWELGY.

One can recognise a PRC barrel domain in the interval 95-169 (EDGYYWTDLI…QITVDWELGY (75 aa)).

This sequence belongs to the RimM family. Binds ribosomal protein uS19.

It localises to the cytoplasm. In terms of biological role, an accessory protein needed during the final step in the assembly of 30S ribosomal subunit, possibly for assembly of the head region. Essential for efficient processing of 16S rRNA. May be needed both before and after RbfA during the maturation of 16S rRNA. It has affinity for free ribosomal 30S subunits but not for 70S ribosomes. In Nitrosomonas europaea (strain ATCC 19718 / CIP 103999 / KCTC 2705 / NBRC 14298), this protein is Ribosome maturation factor RimM.